The primary structure comprises 236 residues: 7-cyano-7-deazaguanine synthase (236 aa).

7-17 serves as a coordination point for ATP; the sequence is CSGGLDSVSLA. Positions 185, 193, 196, and 199 each coordinate Zn(2+).

This sequence belongs to the QueC family. The cofactor is Zn(2+).

It carries out the reaction 7-carboxy-7-deazaguanine + NH4(+) + ATP = 7-cyano-7-deazaguanine + ADP + phosphate + H2O + H(+). The protein operates within purine metabolism; 7-cyano-7-deazaguanine biosynthesis. Its function is as follows. Catalyzes the ATP-dependent conversion of 7-carboxy-7-deazaguanine (CDG) to 7-cyano-7-deazaguanine (preQ(0)). The sequence is that of 7-cyano-7-deazaguanine synthase from Rhizobium leguminosarum bv. trifolii (strain WSM2304).